Consider the following 598-residue polypeptide: 2-succinyl-5-enolpyruvyl-6-hydroxy-3-cyclohexene-1-carboxylate synthase (598 aa).

This sequence belongs to the TPP enzyme family. MenD subfamily. As to quaternary structure, homodimer. Mg(2+) is required as a cofactor. It depends on Mn(2+) as a cofactor. The cofactor is thiamine diphosphate.

It catalyses the reaction isochorismate + 2-oxoglutarate + H(+) = 5-enolpyruvoyl-6-hydroxy-2-succinyl-cyclohex-3-ene-1-carboxylate + CO2. It participates in quinol/quinone metabolism; 1,4-dihydroxy-2-naphthoate biosynthesis; 1,4-dihydroxy-2-naphthoate from chorismate: step 2/7. It functions in the pathway cofactor biosynthesis; phylloquinone biosynthesis. Catalyzes the thiamine diphosphate-dependent decarboxylation of 2-oxoglutarate and the subsequent addition of the resulting succinic semialdehyde-thiamine pyrophosphate anion to isochorismate to yield 2-succinyl-5-enolpyruvyl-6-hydroxy-3-cyclohexene-1-carboxylate (SEPHCHC). The polypeptide is 2-succinyl-5-enolpyruvyl-6-hydroxy-3-cyclohexene-1-carboxylate synthase (Prochlorococcus marinus (strain NATL1A)).